A 199-amino-acid polypeptide reads, in one-letter code: Probable GTP-binding protein EngB (199 aa).

An EngB-type G domain is found at 24-197; that stretch reads EGYEVIFAGR…GARLNTFFGY (174 aa). GTP contacts are provided by residues 32 to 39, 59 to 63, 77 to 80, 144 to 147, and 176 to 178; these read GRSNAGKS, GKTQH, DLPG, TKSD, and FSS. Positions 39 and 61 each coordinate Mg(2+).

It belongs to the TRAFAC class TrmE-Era-EngA-EngB-Septin-like GTPase superfamily. EngB GTPase family. It depends on Mg(2+) as a cofactor.

Its function is as follows. Necessary for normal cell division and for the maintenance of normal septation. The protein is Probable GTP-binding protein EngB of Ruthia magnifica subsp. Calyptogena magnifica.